The primary structure comprises 150 residues: Ventricular natriuretic peptide (150 aa).

The N-terminal stretch at methionine 1–alanine 21 is a signal peptide. The disordered stretch occupies residues glutamate 52 to serine 75. An intrachain disulfide couples cysteine 120 to cysteine 136.

It belongs to the natriuretic peptide family. Heart ventricle, and to a lower extent in heart atrium.

It localises to the secreted. Its function is as follows. Exhibits natriuretic and vasodepressor activity. This chain is Ventricular natriuretic peptide (vnp), found in Anguilla japonica (Japanese eel).